A 266-amino-acid chain; its full sequence is Putative carbamate hydrolase RutD (266 aa).

The region spanning 14 to 115 is the AB hydrolase-1 domain; the sequence is PVVVLISGLG…TMLVSVNGWL (102 aa).

The protein belongs to the AB hydrolase superfamily. Hydrolase RutD family.

The enzyme catalyses carbamate + 2 H(+) = NH4(+) + CO2. In terms of biological role, involved in pyrimidine catabolism. May facilitate the hydrolysis of carbamate, a reaction that can also occur spontaneously. This is Putative carbamate hydrolase RutD from Shigella flexneri serotype X (strain 2002017).